Here is a 318-residue protein sequence, read N- to C-terminus: tRNA dimethylallyltransferase (318 aa).

Position 13–20 (13–20 (GPTAVGKT)) interacts with ATP. Residue 15–20 (TAVGKT) coordinates substrate. The interval 38-41 (DSMQ) is interaction with substrate tRNA.

The protein belongs to the IPP transferase family. In terms of assembly, monomer. Mg(2+) serves as cofactor.

It carries out the reaction adenosine(37) in tRNA + dimethylallyl diphosphate = N(6)-dimethylallyladenosine(37) in tRNA + diphosphate. Its function is as follows. Catalyzes the transfer of a dimethylallyl group onto the adenine at position 37 in tRNAs that read codons beginning with uridine, leading to the formation of N6-(dimethylallyl)adenosine (i(6)A). This Bacillus pumilus (strain SAFR-032) protein is tRNA dimethylallyltransferase.